Reading from the N-terminus, the 186-residue chain is dCTP deaminase (186 aa).

106–111 (KSTYAR) provides a ligand contact to dCTP. Glu-132 functions as the Proton donor/acceptor in the catalytic mechanism. Residues Gln-151, Tyr-166, and Gln-176 each contribute to the dCTP site.

This sequence belongs to the dCTP deaminase family. As to quaternary structure, homotrimer.

The catalysed reaction is dCTP + H2O + H(+) = dUTP + NH4(+). It participates in pyrimidine metabolism; dUMP biosynthesis; dUMP from dCTP (dUTP route): step 1/2. Its function is as follows. Catalyzes the deamination of dCTP to dUTP. The sequence is that of dCTP deaminase from Nautilia profundicola (strain ATCC BAA-1463 / DSM 18972 / AmH).